Here is a 512-residue protein sequence, read N- to C-terminus: 2,3-bisphosphoglycerate-independent phosphoglycerate mutase (512 aa).

Mn(2+) is bound by residues Asp12 and Ser62. Catalysis depends on Ser62, which acts as the Phosphoserine intermediate. Substrate contacts are provided by residues His123, 154-155 (RD), Arg181, Arg187, 253-256 (RPDR), and Lys336. The Mn(2+) site is built by Asp403, His407, Asp444, His445, and His462.

This sequence belongs to the BPG-independent phosphoglycerate mutase family. In terms of assembly, monomer. Requires Mn(2+) as cofactor.

The catalysed reaction is (2R)-2-phosphoglycerate = (2R)-3-phosphoglycerate. It participates in carbohydrate degradation; glycolysis; pyruvate from D-glyceraldehyde 3-phosphate: step 3/5. In terms of biological role, catalyzes the interconversion of 2-phosphoglycerate and 3-phosphoglycerate. The sequence is that of 2,3-bisphosphoglycerate-independent phosphoglycerate mutase from Onion yellows phytoplasma (strain OY-M).